A 332-amino-acid polypeptide reads, in one-letter code: Glycerol-3-phosphate dehydrogenase [NAD(P)+] (332 aa).

NADPH-binding residues include serine 11, phenylalanine 12, lysine 32, and lysine 106. Lysine 106, glycine 137, and serine 139 together coordinate sn-glycerol 3-phosphate. Alanine 141 contributes to the NADPH binding site. Positions 192, 245, 255, 256, and 257 each coordinate sn-glycerol 3-phosphate. Lysine 192 (proton acceptor) is an active-site residue. An NADPH-binding site is contributed by arginine 256. The NADPH site is built by valine 280 and glutamate 282.

Belongs to the NAD-dependent glycerol-3-phosphate dehydrogenase family.

It localises to the cytoplasm. The catalysed reaction is sn-glycerol 3-phosphate + NAD(+) = dihydroxyacetone phosphate + NADH + H(+). It catalyses the reaction sn-glycerol 3-phosphate + NADP(+) = dihydroxyacetone phosphate + NADPH + H(+). It participates in membrane lipid metabolism; glycerophospholipid metabolism. Its function is as follows. Catalyzes the reduction of the glycolytic intermediate dihydroxyacetone phosphate (DHAP) to sn-glycerol 3-phosphate (G3P), the key precursor for phospholipid synthesis. This Staphylococcus aureus (strain Mu3 / ATCC 700698) protein is Glycerol-3-phosphate dehydrogenase [NAD(P)+].